A 282-amino-acid polypeptide reads, in one-letter code: Probable endonuclease 4 (282 aa).

Positions 71, 111, 147, 181, 184, 218, 231, 233, and 263 each coordinate Zn(2+).

This sequence belongs to the AP endonuclease 2 family. The cofactor is Zn(2+).

The catalysed reaction is Endonucleolytic cleavage to 5'-phosphooligonucleotide end-products.. In terms of biological role, endonuclease IV plays a role in DNA repair. It cleaves phosphodiester bonds at apurinic or apyrimidinic (AP) sites, generating a 3'-hydroxyl group and a 5'-terminal sugar phosphate. The polypeptide is Probable endonuclease 4 (Protochlamydia amoebophila (strain UWE25)).